A 367-amino-acid chain; its full sequence is Chorismate synthase (367 aa).

Residues R48 and R54 each contribute to the NADP(+) site. FMN-binding positions include 125–127 (RSS), 238–239 (NA), G278, 293–297 (KPTSS), and R319.

This sequence belongs to the chorismate synthase family. As to quaternary structure, homotetramer. Requires FMNH2 as cofactor.

It catalyses the reaction 5-O-(1-carboxyvinyl)-3-phosphoshikimate = chorismate + phosphate. It participates in metabolic intermediate biosynthesis; chorismate biosynthesis; chorismate from D-erythrose 4-phosphate and phosphoenolpyruvate: step 7/7. Functionally, catalyzes the anti-1,4-elimination of the C-3 phosphate and the C-6 proR hydrogen from 5-enolpyruvylshikimate-3-phosphate (EPSP) to yield chorismate, which is the branch point compound that serves as the starting substrate for the three terminal pathways of aromatic amino acid biosynthesis. This reaction introduces a second double bond into the aromatic ring system. The polypeptide is Chorismate synthase (Xanthomonas campestris pv. campestris (strain 8004)).